Here is a 252-residue protein sequence, read N- to C-terminus: Ubiquinone biosynthesis O-methyltransferase (252 aa).

Residues R36, G60, D81, and L123 each contribute to the S-adenosyl-L-methionine site.

This sequence belongs to the methyltransferase superfamily. UbiG/COQ3 family.

The enzyme catalyses a 3-demethylubiquinol + S-adenosyl-L-methionine = a ubiquinol + S-adenosyl-L-homocysteine + H(+). It catalyses the reaction a 3-(all-trans-polyprenyl)benzene-1,2-diol + S-adenosyl-L-methionine = a 2-methoxy-6-(all-trans-polyprenyl)phenol + S-adenosyl-L-homocysteine + H(+). It functions in the pathway cofactor biosynthesis; ubiquinone biosynthesis. O-methyltransferase that catalyzes the 2 O-methylation steps in the ubiquinone biosynthetic pathway. This chain is Ubiquinone biosynthesis O-methyltransferase, found in Rickettsia prowazekii (strain Madrid E).